The sequence spans 366 residues: Alanine racemase (366 aa).

The active-site Proton acceptor; specific for D-alanine is the Lys-40. Residue Lys-40 is modified to N6-(pyridoxal phosphate)lysine. Arg-136 contacts substrate. Tyr-263 acts as the Proton acceptor; specific for L-alanine in catalysis. Position 310 (Met-310) interacts with substrate.

Belongs to the alanine racemase family. It depends on pyridoxal 5'-phosphate as a cofactor.

The catalysed reaction is L-alanine = D-alanine. Its pathway is amino-acid biosynthesis; D-alanine biosynthesis; D-alanine from L-alanine: step 1/1. Catalyzes the interconversion of L-alanine and D-alanine. May also act on other amino acids. The polypeptide is Alanine racemase (alr) (Streptococcus pyogenes serotype M28 (strain MGAS6180)).